Consider the following 245-residue polypeptide: MDEFDFNAAPPEFQEIRWMVASIFLISGTGWIVNYVTTIRTALRDRTSGVTLLSLCNNLAWETVFAVIHRPPHLIAALVITVWLLVNIYVIYVSVKFARESQDVSPLLRRHLPVVTLLGFVGFLTGHIALSMHLGPTKALYWGGMICQVTLSASALGLLIQRGHTRGASPAMWLSRFIASSFGVPGLFVRAVYWPSAWGWADNILMRWLSGVFFLLDLSYGAIYYHISRSEHEVGASGSKMSKRE.

Transmembrane regions (helical) follow at residues 19–39, 48–68, 75–95, 112–132, 140–160, 177–197, and 208–228; these read MVAS…VTTI, SGVT…FAVI, IAAL…YVSV, LPVV…ALSM, LYWG…GLLI, FIAS…WPSA, and WLSG…YHIS.

The protein belongs to the paxB family.

It localises to the membrane. It functions in the pathway secondary metabolite biosynthesis; terpenoid biosynthesis. In terms of biological role, terpene cyclase; part of the cluster that mediates the biosynthesis of shearones, diterpenoid pyrones (DPs) which are structurally diverse meroterpenoids consisting of a diterpene linked by a pyrone, and which may exhibit a range of bioactivities. Within the pathway, esdpB takes part to the biosynthesis of the molecular scaffold by catalyzing the cyclization of the prenyl group initiated by protonation and ring-opening of the epoxide to produce the diterpenoid pyrone scaffold. The molecular scaffold is commonly biosynthesized by a series of enzymes including the non-reducing polyketide synthase (NR-PKS) esdpA that generates an alpha-pyrone; the prenyltransferase esdpC that attaches a geranylgeranyl pyrophosphate (GGPP) produced by the GGPP synthase (GGPPS) esdpD onto the pyrone unit; the FAD-dependent monooxygenase esdpE that converts an olefin on the diterpene unit into an epoxide; and the terpene cyclase esdpB that catalyzes the cyclization reactions to give the molecular backbone shearone A. In the modification steps, esdpF oxidizes the hydroxy group to a ketone at C-3 and esdpG then attaches hydroxy groups at both C-11 and C-12. After that, esdpI hydroxylates at C-20 and esdpH hydroxylates at C-6'. The ether bridge is generated by nucleophilic attack of the hydroxy group at C-20 to the carbonyl carbon at C-3. EsdpH can also functions prior to esdpI. The different combinations of these modification enzymes lead to the production of diverse shearone derivatives, shearone I being the end product of the pathway. The alpha-ketoglutarate-dependent dioxygenase esdpJ seems not to be involved in this pathway. This Penicillium shearii (Eupenicillium shearii) protein is Terpene cyclase esdpB.